Reading from the N-terminus, the 261-residue chain is 4-hydroxy-tetrahydrodipicolinate reductase (261 aa).

8–13 (GYKGRM) is an NAD(+) binding site. R36 contacts NADP(+). Residues 95 to 97 (GTT) and 121 to 124 (APNF) contribute to the NAD(+) site. H151 acts as the Proton donor/acceptor in catalysis. Position 152 (H152) interacts with (S)-2,3,4,5-tetrahydrodipicolinate. K155 acts as the Proton donor in catalysis. Residue 161 to 162 (GT) participates in (S)-2,3,4,5-tetrahydrodipicolinate binding.

The protein belongs to the DapB family.

The protein resides in the cytoplasm. The enzyme catalyses (S)-2,3,4,5-tetrahydrodipicolinate + NAD(+) + H2O = (2S,4S)-4-hydroxy-2,3,4,5-tetrahydrodipicolinate + NADH + H(+). The catalysed reaction is (S)-2,3,4,5-tetrahydrodipicolinate + NADP(+) + H2O = (2S,4S)-4-hydroxy-2,3,4,5-tetrahydrodipicolinate + NADPH + H(+). Its pathway is amino-acid biosynthesis; L-lysine biosynthesis via DAP pathway; (S)-tetrahydrodipicolinate from L-aspartate: step 4/4. In terms of biological role, catalyzes the conversion of 4-hydroxy-tetrahydrodipicolinate (HTPA) to tetrahydrodipicolinate. The polypeptide is 4-hydroxy-tetrahydrodipicolinate reductase (Lactiplantibacillus plantarum (strain ATCC BAA-793 / NCIMB 8826 / WCFS1) (Lactobacillus plantarum)).